We begin with the raw amino-acid sequence, 352 residues long: UPF0324 membrane protein blr3189 (352 aa).

The next 11 helical transmembrane spans lie at isoleucine 21–arginine 43, tyrosine 53–tryptophan 71, leucine 88–isoleucine 110, alanine 114–leucine 136, leucine 143–alanine 165, serine 175–leucine 197, isoleucine 204–valine 226, leucine 236–alanine 253, valine 265–leucine 284, valine 294–glycine 316, and valine 329–phenylalanine 351.

Belongs to the UPF0324 family.

Its subcellular location is the cell membrane. This chain is UPF0324 membrane protein blr3189, found in Bradyrhizobium diazoefficiens (strain JCM 10833 / BCRC 13528 / IAM 13628 / NBRC 14792 / USDA 110).